Reading from the N-terminus, the 376-residue chain is 23S rRNA (uracil(747)-C(5))-methyltransferase RlmC (376 aa).

Positions 3, 11, 14, and 87 each coordinate [4Fe-4S] cluster. S-adenosyl-L-methionine-binding residues include Q212, F241, E262, and N307. Residue C334 is the Nucleophile of the active site.

This sequence belongs to the class I-like SAM-binding methyltransferase superfamily. RNA M5U methyltransferase family. RlmC subfamily.

The catalysed reaction is uridine(747) in 23S rRNA + S-adenosyl-L-methionine = 5-methyluridine(747) in 23S rRNA + S-adenosyl-L-homocysteine + H(+). Its function is as follows. Catalyzes the formation of 5-methyl-uridine at position 747 (m5U747) in 23S rRNA. The polypeptide is 23S rRNA (uracil(747)-C(5))-methyltransferase RlmC (Yersinia pseudotuberculosis serotype O:1b (strain IP 31758)).